The following is a 725-amino-acid chain: Kinesin-like protein KIN-8A (725 aa).

A disordered region spans residues Met-1–Gly-32. Residues Arg-151–Ile-481 enclose the Kinesin motor domain. Gly-243–Thr-250 contacts ATP. 2 coiled-coil regions span residues Glu-499 to Asn-541 and Glu-583 to Leu-617. 2 disordered regions span residues Gly-652–Ser-672 and Ser-691–His-725. Residues Arg-655–Ser-665 are compositionally biased toward basic and acidic residues.

It belongs to the TRAFAC class myosin-kinesin ATPase superfamily. Kinesin family. KIN-8 subfamily.

The polypeptide is Kinesin-like protein KIN-8A (Arabidopsis thaliana (Mouse-ear cress)).